A 303-amino-acid polypeptide reads, in one-letter code: Protoheme IX farnesyltransferase (303 aa).

The next 7 membrane-spanning stretches (helical) occupy residues 25-45 (MGLVQGNLIPAFAGSWLAIVL), 54-74 (IPQILMMLVGSTLIMGGACAL), 118-138 (LLFALNIPSGVIGLLGIVGYV), 151-171 (WNTVIGSFPGAVPPLIGWTAI), 177-197 (LVAVALFLVIFCWQPIHFYAL), 230-250 (LVVLLPLPFLLSSLGVTFIVL), and 280-300 (FIYSLNYLVVFFVLVVVISLI).

This sequence belongs to the UbiA prenyltransferase family. Protoheme IX farnesyltransferase subfamily. In terms of assembly, interacts with CtaA.

The protein localises to the cell membrane. The catalysed reaction is heme b + (2E,6E)-farnesyl diphosphate + H2O = Fe(II)-heme o + diphosphate. Its pathway is porphyrin-containing compound metabolism; heme O biosynthesis; heme O from protoheme: step 1/1. In terms of biological role, converts heme B (protoheme IX) to heme O by substitution of the vinyl group on carbon 2 of heme B porphyrin ring with a hydroxyethyl farnesyl side group. This Staphylococcus saprophyticus subsp. saprophyticus (strain ATCC 15305 / DSM 20229 / NCIMB 8711 / NCTC 7292 / S-41) protein is Protoheme IX farnesyltransferase.